A 327-amino-acid chain; its full sequence is 4-hydroxy-2-oxoglutarate aldolase, mitochondrial (327 aa).

The transit peptide at 1 to 25 (MLVPRVWSSVRLGLSRVLSRTLRGW) directs the protein to the mitochondrion. Position 77–78 (77–78 (SN)) interacts with substrate. Lys-196 acts as the Schiff-base intermediate with substrate in catalysis. Substrate is bound by residues Ser-198 and Gly-222.

Belongs to the DapA family. As to quaternary structure, homotetramer.

The protein resides in the mitochondrion. The enzyme catalyses (4S)-4-hydroxy-2-oxoglutarate = glyoxylate + pyruvate. It catalyses the reaction (4R)-4-hydroxy-2-oxoglutarate = glyoxylate + pyruvate. Its activity is regulated as follows. Inhibited by divalent cations. In terms of biological role, catalyzes the final step in the metabolic pathway of hydroxyproline. This Bos taurus (Bovine) protein is 4-hydroxy-2-oxoglutarate aldolase, mitochondrial (HOGA1).